Here is a 575-residue protein sequence, read N- to C-terminus: Proline--tRNA ligase (575 aa).

It belongs to the class-II aminoacyl-tRNA synthetase family. ProS type 1 subfamily. Homodimer.

Its subcellular location is the cytoplasm. It carries out the reaction tRNA(Pro) + L-proline + ATP = L-prolyl-tRNA(Pro) + AMP + diphosphate. Functionally, catalyzes the attachment of proline to tRNA(Pro) in a two-step reaction: proline is first activated by ATP to form Pro-AMP and then transferred to the acceptor end of tRNA(Pro). As ProRS can inadvertently accommodate and process non-cognate amino acids such as alanine and cysteine, to avoid such errors it has two additional distinct editing activities against alanine. One activity is designated as 'pretransfer' editing and involves the tRNA(Pro)-independent hydrolysis of activated Ala-AMP. The other activity is designated 'posttransfer' editing and involves deacylation of mischarged Ala-tRNA(Pro). The misacylated Cys-tRNA(Pro) is not edited by ProRS. The sequence is that of Proline--tRNA ligase from Heliobacterium modesticaldum (strain ATCC 51547 / Ice1).